Reading from the N-terminus, the 496-residue chain is MHAKSLTELRAALAAKECSAVELAQLYLKRIDAARDLNAFVHVDADLTLAQAKAADAELARGAGGPLTGVPIAHKDVFVTRGWRSTAGSKMLENYQSPFDATVVARLQAAGMVTLGKTNMDEFAMGSSNENSAFGAVKNPWDTHAVPGGSSGGSSAAVAARLAPAATGTDTGGSIRQPASFAGVTGIKPTYGRVSRYGMIAFASSLDQGGPMAQSASDCALLLNAMAGFDERDSTSLERDDEDFTRHLGQPWTAGSDAARPLAGLRIGLPNEYFGAGLADDVRATIDAALKQYEALGATLVPVSLPKTELSIPVYYVIAPAEASSNLSRFDGVRFGHRAAQYGDLLDMYKKSRAEGFGPEVKRRILVGTYVLSHGYYDAYYLQAQKIRRIIAQDFQEAFKSCDVIMGPASPTVAWDLGAKGDDPVQMYLADIYTLSVSLAGLPGMSVPCGFGAGANAKRPVGLQIIGNYFNEARMLQVADAFQRATDWHKQVPAGV.

Catalysis depends on charge relay system residues Lys-75 and Ser-150. Ser-174 serves as the catalytic Acyl-ester intermediate.

It belongs to the amidase family. GatA subfamily. In terms of assembly, heterotrimer of A, B and C subunits.

It carries out the reaction L-glutamyl-tRNA(Gln) + L-glutamine + ATP + H2O = L-glutaminyl-tRNA(Gln) + L-glutamate + ADP + phosphate + H(+). Functionally, allows the formation of correctly charged Gln-tRNA(Gln) through the transamidation of misacylated Glu-tRNA(Gln) in organisms which lack glutaminyl-tRNA synthetase. The reaction takes place in the presence of glutamine and ATP through an activated gamma-phospho-Glu-tRNA(Gln). This chain is Glutamyl-tRNA(Gln) amidotransferase subunit A, found in Burkholderia vietnamiensis (strain G4 / LMG 22486) (Burkholderia cepacia (strain R1808)).